A 738-amino-acid chain; its full sequence is Coiled-coil domain-containing protein 142 (738 aa).

A disordered region spans residues 1 to 34; that stretch reads MARASSSSGPLPPLANVPSSWAQPVGAGEERDEG. Residues 69-92 adopt a coiled-coil conformation; it reads ALQRLRATLLRLHREREQLLRARD. The interval 682–704 is disordered; the sequence is LSTLGGGGRGGGGGGGPGPSPEA. Gly residues predominate over residues 685–698; sequence LGGGGRGGGGGGGP.

The sequence is that of Coiled-coil domain-containing protein 142 (Ccdc142) from Mus musculus (Mouse).